The primary structure comprises 70 residues: Putative membrane protein insertion efficiency factor (70 aa).

Belongs to the UPF0161 family.

The protein localises to the cell membrane. Its function is as follows. Could be involved in insertion of integral membrane proteins into the membrane. The polypeptide is Putative membrane protein insertion efficiency factor (Finegoldia magna (strain ATCC 29328 / DSM 20472 / WAL 2508) (Peptostreptococcus magnus)).